Reading from the N-terminus, the 427-residue chain is uncharacterized protein (427 aa).

The next 3 membrane-spanning stretches (helical) occupy residues 10-30, 43-63, and 71-91; these read LAYL…AGFW, KIIS…SKLA, and IFEI…SFIS. At Thr-199 the chain carries Phosphothreonine. Residue Ser-234 is modified to Phosphoserine. The next 5 membrane-spanning stretches (helical) occupy residues 253 to 273, 288 to 308, 327 to 347, 358 to 378, and 397 to 417; these read NLNP…IGPL, FAEA…VVLG, LLIG…LPII, ILDD…PPAI, and ILFW…VSGA.

It belongs to the auxin efflux carrier (TC 2.A.69) family.

It localises to the membrane. This is an uncharacterized protein from Saccharomyces cerevisiae (strain ATCC 204508 / S288c) (Baker's yeast).